Consider the following 632-residue polypeptide: Putative ferric transport system permease protein FbpB 1 (632 aa).

15 consecutive transmembrane segments (helical) span residues 5–25, 37–57, 58–78, 93–113, 144–164, 178–198, 223–243, 270–290, 299–319, 330–350, 377–397, 436–456, 469–489, 490–510, and 547–567; these read SFNLTWAWFLPVIVYGALPLL, LFLTALSVLFMFISATVYKIS, MGYSVIVLLVGYTALATLSLA, LLCIILLIFFFIVYPTLAIFV, LFLSGFVGIVSTVFGLAFALY, IFSILPIVTPPFVVGLGVTLM, GFNGIAIAQILAFAPISFMIL, YQIIFPLLRPALANSFLIVFI, PLVLGGSFDVIATQIYFYIAG, LGSMLLIFSLAIFIIQYIWIG, IIGMLGFWVIFNMALYGSIFY, IYAGIAAPLTAFFGLLIAYIV, FLTMLCFAVPGTVAGVSYILA, FNNAPLYITGTGIIVIISMVM, and CFIVLPLLKPALLSALVTSFV. One can recognise an ABC transmembrane type-1 1 domain in the interval 140–345; that stretch reads ITNSLFLSGF…IFSLAIFIIQ (206 aa). One can recognise an ABC transmembrane type-1 2 domain in the interval 431–632; sequence LINTLIYAGI…DCRRYAYFPF (202 aa).

The protein belongs to the binding-protein-dependent transport system permease family. FbpB subfamily. As to quaternary structure, the complex is composed of two ATP-binding proteins (FbpC), two transmembrane proteins (FbpB) and a solute-binding protein (FbpA).

It localises to the cell inner membrane. Part of the ABC transporter complex FbpABC (TC 3.A.1.10.1) involved in Fe(3+) ions import. Probably responsible for the translocation of the substrate across the membrane. The polypeptide is Putative ferric transport system permease protein FbpB 1 (fbpB1) (Haemophilus influenzae (strain ATCC 51907 / DSM 11121 / KW20 / Rd)).